The following is a 192-amino-acid chain: Shikimate kinase (192 aa).

An ATP-binding site is contributed by 27–32 (GTGKTT). Residue T31 participates in Mg(2+) binding. Substrate-binding residues include D49, R73, and G95. R133 contributes to the ATP binding site. R152 serves as a coordination point for substrate.

The protein belongs to the shikimate kinase family. As to quaternary structure, monomer. It depends on Mg(2+) as a cofactor.

It is found in the cytoplasm. The enzyme catalyses shikimate + ATP = 3-phosphoshikimate + ADP + H(+). It functions in the pathway metabolic intermediate biosynthesis; chorismate biosynthesis; chorismate from D-erythrose 4-phosphate and phosphoenolpyruvate: step 5/7. Catalyzes the specific phosphorylation of the 3-hydroxyl group of shikimic acid using ATP as a cosubstrate. The polypeptide is Shikimate kinase (Hahella chejuensis (strain KCTC 2396)).